Here is a 102-residue protein sequence, read N- to C-terminus: MANKKIRIRLKAYEHRTLDTAAEKIVETATRTGATVAGPVPLPTERSLYTIIRATHKYKDSREQFEMRTHKRLIDIVNPTQKTVDALMKLDLPSGVNVKIKL.

It belongs to the universal ribosomal protein uS10 family. Part of the 30S ribosomal subunit.

Functionally, involved in the binding of tRNA to the ribosomes. The sequence is that of Small ribosomal subunit protein uS10 from Streptococcus equi subsp. zooepidemicus (strain MGCS10565).